The primary structure comprises 488 residues: Glutamyl-tRNA(Gln) amidotransferase subunit A (488 aa).

Catalysis depends on charge relay system residues K77 and S152. The Acyl-ester intermediate role is filled by S176.

Belongs to the amidase family. GatA subfamily. As to quaternary structure, heterotrimer of A, B and C subunits.

The catalysed reaction is L-glutamyl-tRNA(Gln) + L-glutamine + ATP + H2O = L-glutaminyl-tRNA(Gln) + L-glutamate + ADP + phosphate + H(+). Its function is as follows. Allows the formation of correctly charged Gln-tRNA(Gln) through the transamidation of misacylated Glu-tRNA(Gln) in organisms which lack glutaminyl-tRNA synthetase. The reaction takes place in the presence of glutamine and ATP through an activated gamma-phospho-Glu-tRNA(Gln). In Streptococcus sanguinis (strain SK36), this protein is Glutamyl-tRNA(Gln) amidotransferase subunit A.